We begin with the raw amino-acid sequence, 271 residues long: uncharacterized protein (271 aa).

The interval 233 to 261 (VEPDPNRFSEPVDQPTLVEEGKEARRTER) is disordered. Residues 251-261 (EEGKEARRTER) are compositionally biased toward basic and acidic residues.

May be involved in swimming motility. This is an uncharacterized protein from Haloferax volcanii (strain ATCC 29605 / DSM 3757 / JCM 8879 / NBRC 14742 / NCIMB 2012 / VKM B-1768 / DS2) (Halobacterium volcanii).